A 255-amino-acid polypeptide reads, in one-letter code: Triosephosphate isomerase (255 aa).

9 to 11 (NWK) contacts substrate. H95 (electrophile) is an active-site residue. The active-site Proton acceptor is the E167. Substrate contacts are provided by residues G173, S212, and 233 to 234 (GG).

The protein belongs to the triosephosphate isomerase family. In terms of assembly, homodimer.

The protein localises to the cytoplasm. It carries out the reaction D-glyceraldehyde 3-phosphate = dihydroxyacetone phosphate. The protein operates within carbohydrate biosynthesis; gluconeogenesis. It participates in carbohydrate degradation; glycolysis; D-glyceraldehyde 3-phosphate from glycerone phosphate: step 1/1. Involved in the gluconeogenesis. Catalyzes stereospecifically the conversion of dihydroxyacetone phosphate (DHAP) to D-glyceraldehyde-3-phosphate (G3P). This chain is Triosephosphate isomerase, found in Salmonella agona (strain SL483).